A 157-amino-acid polypeptide reads, in one-letter code: uncharacterized protein (157 aa).

The N-acetyltransferase domain maps to 9–146 (LLINYKTLDE…GDFYVWHPET (138 aa)).

This is an uncharacterized protein from Bacillus anthracis (strain CDC 684 / NRRL 3495).